The chain runs to 520 residues: DnaJ homolog l(2)tid, mitochondrial (520 aa).

Residues 1–62 (MMISCKKLFV…RRLHTTRDLL (62 aa)) constitute a mitochondrion transit peptide. An Omega-N-methylarginine modification is found at arginine 30. The J domain occupies 65-130 (DYYATLGVAK…QKRREYDTYG (66 aa)). Lysine 106 is subject to N6-acetyllysine. The segment at 214 to 292 (GVNKDVNVNV…CEGKGRTVQR (79 aa)) adopts a CR-type zinc-finger fold. Zn(2+)-binding residues include cysteine 227, cysteine 230, cysteine 244, cysteine 247, cysteine 266, cysteine 269, cysteine 280, and cysteine 283. One copy of the CXXCXGXG motif; approximate repeat lies at 227–234 (CPKCAGTK). One copy of the CXXCXGXG motif repeat lies at 244–251 (CQYCNGTG). The CXXCXGXG motif; approximate repeat unit spans residues 266 to 273 (CRYCQGTR). Residues 280 to 287 (CSECEGKG) form a CXXCXGXG motif repeat. The disordered stretch occupies residues 430–520 (QIHGIANRKD…FISKIKSMFN (91 aa)). The segment covering 446 to 476 (AGASEEPGAGAAAKASAAAAGSGASKPGPGA) has biased composition (low complexity). Residues 479 to 495 (SEGKDQWTDNKKTKAKE) are compositionally biased toward basic and acidic residues. Residues 496 to 511 (GGGSGSGQGDGGGGGF) show a composition bias toward gly residues.

As to quaternary structure, interacts with ptc (via C-terminal cytoplasmic region); the interaction is probably direct. Interacts with hh/hedgehog; the interaction is probably mediated by the hedgehog receptor ptc. In terms of processing, appears to produce proteins of differing size. Predicted to have a molecular mass of 56 kDa (TID56) however proteins of 50 kDa, 47 kDa and 40 kDa have been identified and named TID50, TID47 and TID40. TID50 and TID40 localize to the mitochondria while TID47 localizes to the cytoplasm. TID50 is probably TID56 that has undergone mitochondrial transit peptide processing. TID40 and TID47 may be alternately processed proteins or may be isoforms resulting from alternative splicing. As to expression, ubiquitously expressed throughout embryonic development. In larvae, expression is seen in sensory organs, gopplet cells, gonads, imaginal disks, proventriculus, fat body, hematopoietic organ, midgut, Malpighian tubules and ring gland.

It is found in the cytoplasm. The protein resides in the cytosol. Its subcellular location is the mitochondrion. It localises to the mitochondrion outer membrane. In terms of biological role, involved in hh/hedgehog signaling. May act as a tumor suppressor in larval imaginal disks. The chain is DnaJ homolog l(2)tid, mitochondrial from Drosophila melanogaster (Fruit fly).